The sequence spans 86 residues: uncharacterized protein (86 aa).

Residues 63–85 (VGGRSPSIQNSFFFFFFFFFFFF) form a helical membrane-spanning segment.

It is found in the membrane. This is an uncharacterized protein from Dictyostelium discoideum (Social amoeba).